The primary structure comprises 134 residues: Seminal plasma protein PDC-109 (134 aa).

A signal peptide spans 1–25 (MALQLGLFLIWAGVSVFLQLDPVNG). T36 carries an O-linked (GalNAc...) threonine glycan. Fibronectin type-II domains lie at 44 to 88 (PEDE…YCAQ) and 89 to 134 (RDYA…WKYC). Disulfide bonds link C49–C73, C63–C86, C94–C119, and C108–C134.

The protein belongs to the seminal plasma protein family. As to quaternary structure, homodimer. In terms of processing, O-linked glycan consists of Gal-GalNAc disaccharide which is modified with a sialic acid residue (macro- and/or microheterogeneity account for differences between BSP-A1 and BSP-A2). As to expression, major component of seminal plasma.

The protein resides in the secreted. In terms of biological role, could enhance the fertilizing capacity of bull spermatozoa upon interaction with heparin-like glycosaminoglycans present in the female genital tract. Exhibits both simulatory and inhibitory actions on the release of pituitary gonadotropins. The protein is Seminal plasma protein PDC-109 of Bos taurus (Bovine).